Reading from the N-terminus, the 162-residue chain is Lipid droplet assembly factor 1-A (162 aa).

At methionine 1–glutamine 42 the chain is on the cytoplasmic side. Residues tyrosine 43–valine 63 form a helical membrane-spanning segment. The Lumenal portion of the chain corresponds to proline 64 to valine 65. The helical transmembrane segment at glycine 66–isoleucine 86 threads the bilayer. Position 87 (glutamate 87) is a topological domain, cytoplasmic. A helical transmembrane segment spans residues glycine 88 to methionine 108. Position 109 (serine 109) is a topological domain, lumenal. A helical membrane pass occupies residues leucine 110 to isoleucine 130. Residues histidine 131–serine 162 are Cytoplasmic-facing.

It belongs to the LDAF1 family.

The protein resides in the endoplasmic reticulum membrane. The protein localises to the lipid droplet. In terms of biological role, plays an important role in the formation of lipid droplets (LD) which are storage organelles at the center of lipid and energy homeostasis. The protein is Lipid droplet assembly factor 1-A of Xenopus laevis (African clawed frog).